The sequence spans 138 residues: Large ribosomal subunit protein bL19 (138 aa).

It belongs to the bacterial ribosomal protein bL19 family.

Its function is as follows. This protein is located at the 30S-50S ribosomal subunit interface and may play a role in the structure and function of the aminoacyl-tRNA binding site. The polypeptide is Large ribosomal subunit protein bL19 (Rickettsia africae (strain ESF-5)).